The primary structure comprises 339 residues: MEAKLKALEEKAKLEISQADSTAVLEQARVHYLGKKGELTEILRGMGALSAEERPLVGKIANLVRENIEAALEEAKATVKSKELEKKLMAETIDVTMPGKAIKLGKKHPLTQAMDDLKEIFISMGFKVVEGPEIETVYYNFDGLNAAKNHPSRDMSDTFYFNENTILRTQTSPVQVRTMEKSKPPIRIVSLGRCFRNDTPDATHSPMFHQIEGLVVDEGITMGDLKGTLEVFAKNFFGEDTKIKFRPHNFPFTEPSAEVDATCFKCGGKGCGVCKGNGWIEVLGAGMVHPNVLRNCGIDPEIYSGFAFGMGIDRLTMQKYGIDDIRLLFENDMRFIDQF.

Glu254 is a binding site for Mg(2+).

Belongs to the class-II aminoacyl-tRNA synthetase family. Phe-tRNA synthetase alpha subunit type 1 subfamily. In terms of assembly, tetramer of two alpha and two beta subunits. Requires Mg(2+) as cofactor.

It is found in the cytoplasm. The enzyme catalyses tRNA(Phe) + L-phenylalanine + ATP = L-phenylalanyl-tRNA(Phe) + AMP + diphosphate + H(+). The chain is Phenylalanine--tRNA ligase alpha subunit from Alkaliphilus oremlandii (strain OhILAs) (Clostridium oremlandii (strain OhILAs)).